The following is a 179-amino-acid chain: Large ribosomal subunit protein uL6 (179 aa).

This sequence belongs to the universal ribosomal protein uL6 family. As to quaternary structure, part of the 50S ribosomal subunit.

This protein binds to the 23S rRNA, and is important in its secondary structure. It is located near the subunit interface in the base of the L7/L12 stalk, and near the tRNA binding site of the peptidyltransferase center. The polypeptide is Large ribosomal subunit protein uL6 (Saccharopolyspora erythraea (strain ATCC 11635 / DSM 40517 / JCM 4748 / NBRC 13426 / NCIMB 8594 / NRRL 2338)).